A 131-amino-acid chain; its full sequence is Ribosomally synthesized cyclic peptide phomopsin precursor gigA (131 aa).

The N-terminal stretch at methionine 1–alanine 18 is a signal peptide. 5 consecutive propeptides follow at residues alanine 19–arginine 38, alanine 48–arginine 65, alanine 75–arginine 92, alanine 102–arginine 119, and alanine 129–methionine 131.

Post-translationally, gigA is processed by several endopeptidases including kexin proteases to produce 2 identical copies of the nonaxapeptide Ile-Asn-Phe-Lys-Ile-Pro-Tyr-Thr-Gly, one copy of the nonaketide Ile-Gly-Phe-Lys-Leu-Pro-Tyr-Arg-Gly and one copy of the nonaketide Pro-Asn-Phe-Lys-Met-Pro-Tyr-Arg-Gly, that are further modified into phomapsins B, C and A, respectively. After being excised from the precursor peptide, the core peptides are cyclized and modified post-translationally by enzymes encoded within the gene cluster. Epichloecyclin biosynthesis requires only dimethylation of the side-chain amino group of the conserved lysine for completion.

Its pathway is mycotoxin biosynthesis. Ribosomally synthesized cyclic peptide phomopsin precursor; part of the gene cluster that mediates the biosynthesis of the epichloecyclins, a group of nonapeptides, with a likely cyclic structure and dimethylation of the conserved lysine. The gigA translated product contains 4 repeated peptide embedding the nonapeptide Ile-Asn-Phe-Lys-Ile-Pro-Tyr-Thr-Gly in repeats 1 and 2, Ile-Gly-Phe-Lys-Leu-Pro-Tyr-Arg-Gly in repeat 3, and Pro-Asn-Phe-Lys-Met-Pro-Tyr-Arg-Gly in repeat 4 that are converted into epichloecyclins B, C and A, respectively. Moreover, removal of the last Gly residue in epichloecyclins B and C leads to epichloecyclins D and E, respectively. The sequence is that of Ribosomally synthesized cyclic peptide phomopsin precursor gigA (nc25) from Epichloe festucae (strain Fl1).